The primary structure comprises 167 residues: ATP synthase subunit b (167 aa).

The chain crosses the membrane as a helical span at residues 10 to 30 (TFFFQLANTLIMFLILKHFLF).

Belongs to the ATPase B chain family. F-type ATPases have 2 components, F(1) - the catalytic core - and F(0) - the membrane proton channel. F(1) has five subunits: alpha(3), beta(3), gamma(1), delta(1), epsilon(1). F(0) has three main subunits: a(1), b(2) and c(10-14). The alpha and beta chains form an alternating ring which encloses part of the gamma chain. F(1) is attached to F(0) by a central stalk formed by the gamma and epsilon chains, while a peripheral stalk is formed by the delta and b chains.

It localises to the cell membrane. Functionally, f(1)F(0) ATP synthase produces ATP from ADP in the presence of a proton or sodium gradient. F-type ATPases consist of two structural domains, F(1) containing the extramembraneous catalytic core and F(0) containing the membrane proton channel, linked together by a central stalk and a peripheral stalk. During catalysis, ATP synthesis in the catalytic domain of F(1) is coupled via a rotary mechanism of the central stalk subunits to proton translocation. Component of the F(0) channel, it forms part of the peripheral stalk, linking F(1) to F(0). This is ATP synthase subunit b from Alkaliphilus oremlandii (strain OhILAs) (Clostridium oremlandii (strain OhILAs)).